Consider the following 36-residue polypeptide: Kappa-theraphotoxin-Pg1b (36 aa).

Cystine bridges form between Cys-4–Cys-19, Cys-11–Cys-24, and Cys-18–Cys-31.

It belongs to the neurotoxin 10 (Hwtx-1) family. 44 (Jztx-4) subfamily. Expressed by the venom gland.

Its subcellular location is the secreted. Gating modifier of Kv2.1/KCNB1, Kv2.2/KCNB2 and Kv4.3/KCND3 channels. The chain is Kappa-theraphotoxin-Pg1b from Chilobrachys guangxiensis (Chinese earth tiger tarantula).